A 1159-amino-acid chain; its full sequence is MALELIERGCPNCGGVISSDRLEKGLPCSKCLPKPTEEKVCDALEELKTLKYLKPFCDTDKSLERFINFFEKAVGAKPWSLQRVWAKRVFMNQSFAIVAPTGVGKTTFGLVMSLFLKGRVLAIFPTRLLAQQAGDRLSELAQKVGVNKKILIYQSKKNIREQFLNGDWDILLGTNMFLHKNFENLINFKFKLIFIDDIDSFLKRGKNVDYLFKLLGFSGEEIKLALKENKTQRDYDRLARIRKRKRDTVLIVSSATLKPRGKRAYLFRNLLGFDVQKAITTLRNIVDVAEPVKDLEEALEKSVELIKKLGKGGLVYLSVFYGKDKVQEVKEFYRKHGINAVSYLDYKPEELYQILEKGEFDVAVGISHITNPLVRGIDLPHIIRYAVFLDPPKHVFPTELTLSPPLLHGLLLTLLNLFEGDDRLKAIQYVMYLKRYLTLREEQLDNYPRIKERVEEIKNFLENYLKDENFLKKIKESEDISLVPKEGKLYIVVGDANSYIQASGRTSRFIAGGMTKGLSVVYYSDPKAFYSLKKRLALYYMTQEIEFKRLSEVDLNKLIKEIDEDRKRAREILQGKGVAQIKDLFKTTLVIVESPNKARTIAGFFGKPQMRLVEDSVAYEVPLGDRLLVITASLGHVLDLVTDKGFFGVLDDTYPYLPVYDTIKICRETHEQHTEYEYLKKRCKGKIEDKLEIIKGVREVSYEVDEVFIATDPDAEGEKIGYDLYLLSKPFNFNIKRAEFHEVTPKAFREAIQNPREVDLNLVKAQLVRRILDRWVGFTLSHILWDAFGKKWLSAGRVQTPVLGWVIKRYEESKEKKGEILLHVNDFPLKIEIEDLMFAKEIFKDLELADISLSNPQEEEKRPLPPYTTDTVLEDANEKLHLSAHKTMKILQELFEAGYITYHRTDSTRVSDAGKYLVAKPYITKMFGEEYFYPRSWGEGGAHECIRPTRPLEPKDLEFMITAGIAEFEDPENALKVYELIFKRFMASQMRPAKVITEEIILKLPYFEWKERVVTEVKEHGFDLMYPTFKVFPKKEKLEITHKEFREVPKVYPYTQGTLIQEMKRRGLGRPSTYAQIVQTLLERHYVVEEKGFLIPTDLGREVYEYLTKHFPEWTSEELTRKLEEAMDKIERGELDYMEVLKEVHRIKVLLKEEKAFKK.

The RG N-terminal-type zinc-finger motif lies at 1–40 (MALELIERGCPNCGGVISSDRLEKGLPCSKCLPKPTEEKV). Positions 10, 13, 28, and 31 each coordinate Zn(2+). ATP is bound by residues Gln-82 and 99–106 (APTGVGKT). The 190-residue stretch at 86 to 275 (AKRVFMNQSF…LFRNLLGFDV (190 aa)) folds into the Helicase ATP-binding domain. Residues 196–199 (DDID) carry the DEAD box motif. The topoisomerase I stretch occupies residues 583–1159 (DLFKTTLVIV…LLKEEKAFKK (577 aa)). The 157-residue stretch at 587–743 (TTLVIVESPN…NIKRAEFHEV (157 aa)) folds into the Toprim domain. Mg(2+) is bound by residues Glu-593 and Asp-712. The Topo IA-type catalytic domain occupies 759 to 1152 (DLNLVKAQLV…EVHRIKVLLK (394 aa)). Catalysis depends on Tyr-902, which acts as the O-(5'-phospho-DNA)-tyrosine intermediate.

The protein in the N-terminal section; belongs to the DEAD box helicase family. DDVD subfamily. It in the C-terminal section; belongs to the type IA topoisomerase family. In terms of assembly, monomer. It depends on Zn(2+) as a cofactor. Mg(2+) serves as cofactor.

It is found in the cytoplasm. The enzyme catalyses ATP + H2O = ADP + phosphate + H(+). In terms of biological role, modifies the topological state of DNA by introducing positive supercoils in an ATP-dependent process, increasing the linking number in steps of +1. Binds to single-stranded DNA, transiently cleaves and then rejoins the ends, introducing a positive supercoil in the process. The scissile phosphodiester is attacked by the catalytic tyrosine of the enzyme, resulting in the formation of a DNA-(5'-phosphotyrosyl)-enzyme intermediate. Probably involved in rewinding DNA strands in regions of the chromosome that have opened up to allow replication, transcription, DNA repair and/or for DNA protection. In Aquifex aeolicus (strain VF5), this protein is Reverse gyrase 2.